We begin with the raw amino-acid sequence, 650 residues long: Acetyl-coenzyme A synthetase (650 aa).

CoA contacts are provided by residues 191 to 194 (RGGR), Thr311, and Asn335. Residues 387 to 389 (GEP), 411 to 416 (DTWWQT), Asp500, and Arg515 each bind ATP. Ser523 provides a ligand contact to CoA. Residue Arg526 participates in ATP binding. Residues Val537, His539, and Val542 each contribute to the Mg(2+) site. Arg584 serves as a coordination point for CoA. Residue Lys609 is modified to N6-acetyllysine.

Belongs to the ATP-dependent AMP-binding enzyme family. Mg(2+) is required as a cofactor. Post-translationally, acetylated. Deacetylation by the SIR2-homolog deacetylase activates the enzyme.

It carries out the reaction acetate + ATP + CoA = acetyl-CoA + AMP + diphosphate. Catalyzes the conversion of acetate into acetyl-CoA (AcCoA), an essential intermediate at the junction of anabolic and catabolic pathways. AcsA undergoes a two-step reaction. In the first half reaction, AcsA combines acetate with ATP to form acetyl-adenylate (AcAMP) intermediate. In the second half reaction, it can then transfer the acetyl group from AcAMP to the sulfhydryl group of CoA, forming the product AcCoA. This chain is Acetyl-coenzyme A synthetase, found in Shewanella frigidimarina (strain NCIMB 400).